We begin with the raw amino-acid sequence, 513 residues long: Histidine ammonia-lyase (513 aa).

Residues 144–146 (ASG) constitute a cross-link (5-imidazolinone (Ala-Gly)). Residue S145 is modified to 2,3-didehydroalanine (Ser).

The protein belongs to the PAL/histidase family. Post-translationally, contains an active site 4-methylidene-imidazol-5-one (MIO), which is formed autocatalytically by cyclization and dehydration of residues Ala-Ser-Gly.

Its subcellular location is the cytoplasm. The enzyme catalyses L-histidine = trans-urocanate + NH4(+). It participates in amino-acid degradation; L-histidine degradation into L-glutamate; N-formimidoyl-L-glutamate from L-histidine: step 1/3. This Streptococcus pyogenes serotype M5 (strain Manfredo) protein is Histidine ammonia-lyase.